Reading from the N-terminus, the 344-residue chain is Lysophosphatidic acid receptor 6 (344 aa).

At Met1–Leu19 the chain is on the extracellular side. The N-linked (GlcNAc...) asparagine glycan is linked to Asn5. A helical transmembrane segment spans residues Tyr20–Leu46. The Cytoplasmic segment spans residues Lys47–Tyr55. The chain crosses the membrane as a helical span at residues Met56–Thr79. The Extracellular portion of the chain corresponds to Arg80–Ser92. The cysteines at positions 89 and 168 are disulfide-linked. The helical transmembrane segment at Val93–Val112 threads the bilayer. Over Asp113–Ala133 the chain is Cytoplasmic. The chain crosses the membrane as a helical span at residues Lys134 to Val154. At Gln155 to Leu181 the chain is on the extracellular side. The chain crosses the membrane as a helical span at residues Ser182–Lys209. Residues Thr210–Val227 are Cytoplasmic-facing. The chain crosses the membrane as a helical span at residues Leu228–Ser253. Over Leu254 to Met272 the chain is Extracellular. The chain crosses the membrane as a helical span at residues Tyr273–Tyr292. Residue Cys284 is the site of S-palmitoyl cysteine attachment. Residues Phe293–Ala344 lie on the Cytoplasmic side of the membrane.

It belongs to the G-protein coupled receptor 1 family. Expressed ubiquitously, including in skin and hair follicle cells. Detected in both Henle's and Huxley's layers of the inner root sheath of the hair follicle and in suprabasal layers of the epidermis (at protein level). Expressed at low levels in peripheral blood leukocytes.

Its subcellular location is the cell membrane. Its function is as follows. Binds to oleoyl-L-alpha-lysophosphatidic acid (LPA). Intracellular cAMP is involved in the receptor activation. Important for the maintenance of hair growth and texture. In Homo sapiens (Human), this protein is Lysophosphatidic acid receptor 6 (LPAR6).